Consider the following 397-residue polypeptide: uncharacterized protein (397 aa).

2 positions are modified to phosphoserine: S115 and S141. A disordered region spans residues 135-156; sequence NSLNHDSPPHTPARRSDNSTSK. A Glycyl lysine isopeptide (Lys-Gly) (interchain with G-Cter in SUMO2) cross-link involves residue K239. Residues S269 and S296 each carry the phosphoserine modification. Residues 289–316 form a disordered region; the sequence is GRGPTKASPQPALTVKAKATSSATTLAS. Residues 300 to 316 show a composition bias toward low complexity; the sequence is ALTVKAKATSSATTLAS. S342 bears the Phosphoserine mark. Residues 354-397 form a disordered region; that stretch reads SEAQDSQVTSTKSPTVRCIVPDPPAPLASQRPPRRRWRRTCKDC. Over residues 356 to 367 the composition is skewed to polar residues; that stretch reads AQDSQVTSTKSP. The span at 385–397 shows a compositional bias: basic residues; sequence PPRRRWRRTCKDC.

This is an uncharacterized protein from Rattus norvegicus (Rat).